The primary structure comprises 194 residues: Probable GTP-binding protein EngB (194 aa).

One can recognise an EngB-type G domain in the interval 23 to 194 (DKMEFAFVGR…LNFMEEKLNN (172 aa)). GTP is bound by residues 31–38 (GRSNVGKS), 58–62 (GRTQL), 76–79 (DLPG), 142–145 (TKID), and 173–175 (HSS). Residues Ser38 and Thr60 each coordinate Mg(2+).

Belongs to the TRAFAC class TrmE-Era-EngA-EngB-Septin-like GTPase superfamily. EngB GTPase family. Requires Mg(2+) as cofactor.

Its function is as follows. Necessary for normal cell division and for the maintenance of normal septation. This is Probable GTP-binding protein EngB from Fusobacterium nucleatum subsp. nucleatum (strain ATCC 25586 / DSM 15643 / BCRC 10681 / CIP 101130 / JCM 8532 / KCTC 2640 / LMG 13131 / VPI 4355).